Reading from the N-terminus, the 476-residue chain is MEEPFLLQDEHLVPCKDTWKSGQVTVELKKVSSLAAPMAAVTIAQYLLPVISVMVAGHNGELQLSGVALATSFTNVSGFSILFGLAGALETLCGQAYGAKQYEKIGTYTYSATASNIPICVLISVLWIYIEKLLISLGQDPDISRVAGSYALWLIPALFAHAFFIPLTRFLLAQGLVLPLLYCTLTTLLFHIPVCWAFVYAFGLGSNGAAMAISVSFWFYVVILSCYVRYSSSCDKTRVFVSSDFVSCIKQFFHFGVPSAAMVCLEWWLFELLILCSGLLPNPKLETSVLSICLTTASLHYVIPGGVAAAVSTRVSNKLGAGIPQVARVSVLAGLCLWLVESAFFSTLLFTCRNIIGYAFSNSKEVVDYVANLTPLLCLSFILDGFTAVLNGVARGSGWQHIGALNNVVAYYLVGAPVGVYLAFNRELNGKGLWCGVVVGSAVQAIILAFVTASINWKEQAEKARKRMVSSENRLA.

The next 12 helical transmembrane spans lie at 35-55 (AAPM…SVMV), 66-86 (GVAL…FGLA), 117-137 (IPIC…LISL), 146-166 (VAGS…FFIP), 185-205 (LTTL…FGLG), 208-228 (GAAM…SCYV), 260-280 (AAMV…SGLL), 289-309 (VLSI…GVAA), 331-351 (VLAG…LLFT), 370-390 (VANL…TAVL), 402-422 (IGAL…GVYL), and 433-453 (LWCG…FVTA).

Belongs to the multi antimicrobial extrusion (MATE) (TC 2.A.66.1) family.

The protein resides in the membrane. This is Protein DETOXIFICATION 3 from Arabidopsis thaliana (Mouse-ear cress).